The chain runs to 449 residues: Interferon-related developmental regulator 1 (449 aa).

The segment covering 1-10 (MPKNKKRNAP) has biased composition (basic residues). The segment at 1–41 (MPKNKKRNAPHRGGGGGGGSGAATSAATTGGPHRTVQPFSD) is disordered. Positions 12 to 21 (RGGGGGGGSG) are enriched in gly residues. The segment covering 22–31 (AATSAATTGG) has biased composition (low complexity).

It belongs to the IFRD family. Interacts with PSIP1/LEDGF. Expressed at high levels in the embryonic brain in the period related to neuroblast proliferation and differentiation.

Its subcellular location is the cytoplasm. The protein localises to the cell membrane. It is found in the nucleus. In terms of biological role, probably participates in neurogenesis. Could play a role in regulating gene activity in the proliferative and/or differentiative pathways induced by NGF. The polypeptide is Interferon-related developmental regulator 1 (Ifrd1) (Rattus norvegicus (Rat)).